The chain runs to 471 residues: Glycosyl hydrolase family 109 protein 1 (471 aa).

The N-terminal stretch at Met-1 to Ser-15 is a signal peptide. Cys-16 carries N-palmitoyl cysteine lipidation. Cys-16 is lipidated: S-diacylglycerol cysteine. NAD(+) is bound by residues Met-70–Arg-71, Asp-92, Trp-141–His-144, Glu-161–Val-162, and Asn-190. Substrate is bound by residues Tyr-219, Arg-235, Tyr-247–His-250, and Tyr-325. Tyr-247 is a binding site for NAD(+).

It belongs to the Gfo/Idh/MocA family. Glycosyl hydrolase 109 subfamily. NAD(+) is required as a cofactor.

It localises to the cell membrane. Functionally, glycosidase. This is Glycosyl hydrolase family 109 protein 1 from Phocaeicola vulgatus (strain ATCC 8482 / DSM 1447 / JCM 5826 / CCUG 4940 / NBRC 14291 / NCTC 11154) (Bacteroides vulgatus).